Reading from the N-terminus, the 198-residue chain is dTTP/UTP pyrophosphatase (198 aa).

Asp-72 (proton acceptor) is an active-site residue.

This sequence belongs to the Maf family. YhdE subfamily. A divalent metal cation serves as cofactor.

It is found in the cytoplasm. The catalysed reaction is dTTP + H2O = dTMP + diphosphate + H(+). The enzyme catalyses UTP + H2O = UMP + diphosphate + H(+). Functionally, nucleoside triphosphate pyrophosphatase that hydrolyzes dTTP and UTP. May have a dual role in cell division arrest and in preventing the incorporation of modified nucleotides into cellular nucleic acids. This Pseudomonas fluorescens (strain Pf0-1) protein is dTTP/UTP pyrophosphatase.